We begin with the raw amino-acid sequence, 104 residues long: L-rhamnose mutarotase (104 aa).

Residue tyrosine 18 coordinates substrate. Histidine 22 acts as the Proton donor in catalysis. Residues tyrosine 41 and 76–77 contribute to the substrate site; that span reads WW.

The protein belongs to the rhamnose mutarotase family. Homodimer.

Its subcellular location is the cytoplasm. It catalyses the reaction alpha-L-rhamnose = beta-L-rhamnose. The protein operates within carbohydrate metabolism; L-rhamnose metabolism. Involved in the anomeric conversion of L-rhamnose. The sequence is that of L-rhamnose mutarotase from Shigella flexneri serotype 5b (strain 8401).